The primary structure comprises 153 residues: Ribosome maturation factor RimP (153 aa).

Belongs to the RimP family.

The protein localises to the cytoplasm. Required for maturation of 30S ribosomal subunits. The chain is Ribosome maturation factor RimP from Coxiella burnetii (strain RSA 331 / Henzerling II).